Consider the following 439-residue polypeptide: Probable aspartic-type endopeptidase AFUA_3G01220 (439 aa).

The first 20 residues, 1 to 20, serve as a signal peptide directing secretion; that stretch reads MHFSIGSLFLYLIASASCTA. The disordered stretch occupies residues 31–50; sequence RTPFTTSTSKPSAFTNPSTD. Residues 32 to 45 show a composition bias toward low complexity; that stretch reads TPFTTSTSKPSAFT. One can recognise a Peptidase A1 domain in the interval 95 to 436; sequence FATSINIGNQ…DVGAAEMRFA (342 aa). Asparagine 103 is a glycosylation site (N-linked (GlcNAc...) asparagine). The active site involves aspartate 111. Asparagine 149, asparagine 178, asparagine 187, asparagine 253, asparagine 256, asparagine 276, and asparagine 308 each carry an N-linked (GlcNAc...) asparagine glycan. The active site involves aspartate 323. Residues asparagine 361 and asparagine 394 are each glycosylated (N-linked (GlcNAc...) asparagine).

Belongs to the peptidase A1 family.

Its subcellular location is the secreted. In terms of biological role, probable aspartic-type endopeptidase which contributes to virulence. The polypeptide is Probable aspartic-type endopeptidase AFUA_3G01220 (Aspergillus fumigatus (strain ATCC MYA-4609 / CBS 101355 / FGSC A1100 / Af293) (Neosartorya fumigata)).